Consider the following 441-residue polypeptide: Glutamate-1-semialdehyde 2,1-aminomutase (441 aa).

Lysine 279 is subject to N6-(pyridoxal phosphate)lysine.

It belongs to the class-III pyridoxal-phosphate-dependent aminotransferase family. HemL subfamily. In terms of assembly, homodimer. Requires pyridoxal 5'-phosphate as cofactor.

It localises to the cytoplasm. The enzyme catalyses (S)-4-amino-5-oxopentanoate = 5-aminolevulinate. The protein operates within porphyrin-containing compound metabolism; protoporphyrin-IX biosynthesis; 5-aminolevulinate from L-glutamyl-tRNA(Glu): step 2/2. This Leptospira borgpetersenii serovar Hardjo-bovis (strain JB197) protein is Glutamate-1-semialdehyde 2,1-aminomutase.